A 267-amino-acid polypeptide reads, in one-letter code: Cilia- and flagella-associated protein 300 (267 aa).

The protein belongs to the CFAP300 family. In terms of assembly, interacts with DNAAF2.

Its subcellular location is the cytoplasm. It localises to the cytoskeleton. The protein resides in the cilium axoneme. Its function is as follows. Cilium- and flagellum-specific protein that plays a role in axonemal structure organization and motility. May play a role in outer and inner dynein arm assembly. The protein is Cilia- and flagella-associated protein 300 of Bos taurus (Bovine).